The sequence spans 3739 residues: Pikromycin polyketide synthase component PikAII (3739 aa).

One can recognise a Ketosynthase family 3 (KS3) 1 domain in the interval 35–463 (GEPVAIVGMA…GTNAHVVLEE (429 aa)). 2 module regions span residues 38-1517 (VAIV…EFLL) and 1542-3642 (VAIV…GHLL). Residue cysteine 208 is the Acyl-thioester intermediate; for beta-ketoacyl synthase 1 activity of the active site. Catalysis depends on for beta-ketoacyl synthase 1 activity residues histidine 343 and histidine 383. The interval 572-877 (FVFPGQGTQW…ERLVTSLAEA (306 aa)) is acyltransferase 1. The active-site Acyl-ester intermediate; for acyltransferase 1 activity is the serine 662. Residues 1150–1343 (GTVLVTGAEE…VTSVAWSPWE (194 aa)) form a C2-type beta-ketoacyl reductase 1 region. The For C2-type beta-ketoacyl reductase 1 and probable racemase activities role is filled by tyrosine 1313. The Carrier 1 domain maps to 1445 to 1520 (RRMQELVREH…TLAEFLLAEI (76 aa)). Serine 1480 carries the post-translational modification O-(pantetheine 4'-phosphoryl)serine. A Ketosynthase family 3 (KS3) 2 domain is found at 1539 to 1967 (DEPVAIVGMA…GTNAHIVLEE (429 aa)). Cysteine 1712 functions as the Acyl-thioester intermediate; for beta-ketoacyl synthase 2 activity in the catalytic mechanism. Catalysis depends on for beta-ketoacyl synthase 2 activity residues histidine 1847 and histidine 1887. Residues 2069-2374 (FVFPGQGTQW…HRLTTSLAEA (306 aa)) form an acyltransferase 2 region. Serine 2159 acts as the Acyl-ester intermediate; for acyltransferase 2 activity in catalysis. The tract at residues 2428–2553 (HPLLGAAVAL…GVLAARADRT (126 aa)) is N-terminal hotdog fold. Residues 2428–2703 (HPLLGAAVAL…LTVLPVDPAQ (276 aa)) are dehydratase. Residues 2428-2705 (HPLLGAAVAL…VLPVDPAQLA (278 aa)) enclose the PKS/mFAS DH domain. Residue histidine 2460 is the Proton acceptor; for dehydratase activity of the active site. The segment at 2567–2705 (AEPVDVDGLY…VLPVDPAQLA (139 aa)) is C-terminal hotdog fold. Aspartate 2629 functions as the Proton donor; for dehydratase activity in the catalytic mechanism. The tract at residues 2959–3267 (GSLESLTAAP…QARHTGKVVL (309 aa)) is enoyl reductase. Tyrosine 3005 functions as the For enoyl reductase activity in the catalytic mechanism. Residues 3092–3109 (LLVHSAAGGVGMAAVQLA), 3285–3288 (TGAL), 3309–3312 (SRRG), 3338–3339 (DV), lysine 3388, and 3412–3413 (FS) contribute to the NADP(+) site. Positions 3277 to 3458 (GTVLLTGGTG…LSLGWGLWAE (182 aa)) are beta-ketoacyl reductase 2. Tyrosine 3427 (for beta-ketoacyl reductase 2 activity) is an active-site residue. Positions 3570-3645 (AHLRDLVRTH…ELAGHLLDEL (76 aa)) constitute a Carrier 2 domain. Serine 3605 carries the O-(pantetheine 4'-phosphoryl)serine modification.

In terms of assembly, homodimer. Pikromycin PKS consists of a combination of multimodular (PikAI and PikAII) and monomodular (PikAIII and PikAIV) polypeptides each coding for a functional synthase subunit which participates in 1 (monomodular) or 2 (multimodular) of the six FAS-like elongation steps required for formation of the polyketide. Module 1, 2, 3, 4, 5, and 6 participating in biosynthesis steps 1, 2, 3, 4, 5, and 6, respectively. It depends on pantetheine 4'-phosphate as a cofactor.

The enzyme catalyses 5 (S)-methylmalonyl-CoA + malonyl-CoA + 5 NADPH + 11 H(+) = 10-deoxymethynolide + 6 CO2 + 5 NADP(+) + 6 CoA + 2 H2O. It carries out the reaction 6 (S)-methylmalonyl-CoA + malonyl-CoA + 5 NADPH + 12 H(+) = narbonolide + 7 CO2 + 5 NADP(+) + 7 CoA + 2 H2O. It participates in antibiotic biosynthesis. Functionally, involved in the biosynthesis of 12- and 14-membered ring macrolactone antibiotics such as methymycin/neomethymycin and pikromycin/narbomycin, respectively. Component of the pikromycin PKS which catalyzes the biosynthesis of both precursors 10-deoxymethynolide (12-membered ring macrolactone) and narbonolide (14-membered ring macrolactone). Chain elongation through PikAI, PikAII and PikAIII followed by thioesterase catalyzed termination results in the production of 10-deoxymethynolide, while continued elongation through PikAIV, followed by thioesterase (TE) catalyzed cyclization results in the biosynthesis of the narbonolide. This is Pikromycin polyketide synthase component PikAII from Streptomyces venezuelae.